The following is a 498-amino-acid chain: NADH-quinone oxidoreductase subunit N (498 aa).

A run of 14 helical transmembrane segments spans residues 10-30 (LMPL…MLLI), 44-64 (VVGL…GKFV), 68-88 (VMGM…ILVA), 109-129 (ELYL…ASSH), 130-150 (YASF…LLAY), 164-184 (YLVL…YIYA), 207-227 (VLLG…LAPF), 239-259 (PAPM…GLFV), 273-293 (LVTV…LLAV), 301-321 (ILGY…ISMT), 328-348 (VTVY…AVAL), 377-397 (ATLT…GFIG), 412-434 (FLAA…VMVV), and 458-478 (LMVL…DPMI).

Belongs to the complex I subunit 2 family. In terms of assembly, NDH-1 is composed of 14 different subunits. Subunits NuoA, H, J, K, L, M, N constitute the membrane sector of the complex.

Its subcellular location is the cell inner membrane. The catalysed reaction is a quinone + NADH + 5 H(+)(in) = a quinol + NAD(+) + 4 H(+)(out). In terms of biological role, NDH-1 shuttles electrons from NADH, via FMN and iron-sulfur (Fe-S) centers, to quinones in the respiratory chain. The immediate electron acceptor for the enzyme in this species is believed to be ubiquinone. Couples the redox reaction to proton translocation (for every two electrons transferred, four hydrogen ions are translocated across the cytoplasmic membrane), and thus conserves the redox energy in a proton gradient. This Acinetobacter baumannii (strain AB0057) protein is NADH-quinone oxidoreductase subunit N.